Consider the following 311-residue polypeptide: MSVLVKEVIEKLRLDIVYGEPELLEKEINTADITRPGLEMTGYFDYYTPERIQLLGMKEWSYLISMPSNSRYEVLKKMFLPETPAVIVARGLVVPEEMLKAARECKIAILTSRAATSRLSGELSSYLDSRLAERTSVHGVLMDIYGMGVLIQGDSGIGKSETGLELVKRGHRLVADDRVDIFAKDEITLWGEPAEILKHLIEIRGVGIIDVMSLYGASAVKDSSQVQLAVYLENYDTHKTFDRLGNNAEELEVSGVAIPRIRIPVKTGRNISVVIEAAAMNYRAKEMGFDATRLFDERLTSLIARNEVQNA.

Catalysis depends on residues H138 and K159. 153–160 (GDSGIGKS) is an ATP binding site. Residue S160 coordinates Mg(2+). D177 serves as the catalytic Proton acceptor; for phosphorylation activity. Proton donor; for dephosphorylation activity. The segment at 201–210 (IEIRGVGIID) is important for the catalytic mechanism of both phosphorylation and dephosphorylation. E202 contacts Mg(2+). R243 is a catalytic residue. The segment at 264 to 269 (PVKTGR) is important for the catalytic mechanism of dephosphorylation.

Belongs to the HPrK/P family. In terms of assembly, homohexamer. Mg(2+) is required as a cofactor.

It carries out the reaction [HPr protein]-L-serine + ATP = [HPr protein]-O-phospho-L-serine + ADP + H(+). The catalysed reaction is [HPr protein]-O-phospho-L-serine + phosphate + H(+) = [HPr protein]-L-serine + diphosphate. Its function is as follows. Catalyzes the ATP- as well as the pyrophosphate-dependent phosphorylation of a specific serine residue in HPr, a phosphocarrier protein of the phosphoenolpyruvate-dependent sugar phosphotransferase system (PTS). HprK/P also catalyzes the pyrophosphate-producing, inorganic phosphate-dependent dephosphorylation (phosphorolysis) of seryl-phosphorylated HPr (P-Ser-HPr). The two antagonistic activities of HprK/P are regulated by several intracellular metabolites, which change their concentration in response to the absence or presence of rapidly metabolisable carbon sources (glucose, fructose, etc.) in the growth medium. Therefore, by controlling the phosphorylation state of HPr, HPrK/P is a sensor enzyme that plays a major role in the regulation of carbon metabolism and sugar transport: it mediates carbon catabolite repression (CCR), and regulates PTS-catalyzed carbohydrate uptake and inducer exclusion. This Streptococcus pneumoniae (strain 70585) protein is HPr kinase/phosphorylase.